The primary structure comprises 620 residues: Glutathione-regulated potassium-efflux system protein KefC (620 aa).

Transmembrane regions (helical) follow at residues 4–24, 26–46, 54–74, 86–106, 114–134, 149–169, 178–198, 218–238, 271–291, 296–316, 326–346, and 359–379; these read HTLI…PVAV, LGLG…PWGL, AILH…GLEL, VFGG…GFCV, VALL…MQAM, FAVL…IPLL, ASAF…VVLL, VFSA…EEAG, LLLG…TLVA, VLTL…LVAK, RWFA…FGAA, and ALTL…VLLT. Positions 399–518 constitute an RCK N-terminal domain; the sequence is QPRVIIAGFG…AGVAQPERET (120 aa). Positions 596–620 are disordered; that stretch reads HGWQGTREGKHTGNDADEPEVKPQP.

This sequence belongs to the monovalent cation:proton antiporter 2 (CPA2) transporter (TC 2.A.37) family. KefC subfamily. As to quaternary structure, homodimer. Interacts with the regulatory subunit KefF.

Its subcellular location is the cell inner membrane. Functionally, pore-forming subunit of a potassium efflux system that confers protection against electrophiles. Catalyzes K(+)/H(+) antiport. The polypeptide is Glutathione-regulated potassium-efflux system protein KefC (Cronobacter sakazakii (strain ATCC BAA-894) (Enterobacter sakazakii)).